The chain runs to 650 residues: Threonine--tRNA ligase (650 aa).

The TGS domain occupies 3-65; sequence DLVKVTLPDG…ERDARLEIVT (63 aa). The interval 248-548 is catalytic; the sequence is DHRRLGPQLG…LVEHYAGAFP (301 aa). 3 residues coordinate Zn(2+): Cys-349, His-400, and His-525.

The protein belongs to the class-II aminoacyl-tRNA synthetase family. As to quaternary structure, homodimer. It depends on Zn(2+) as a cofactor.

It localises to the cytoplasm. The enzyme catalyses tRNA(Thr) + L-threonine + ATP = L-threonyl-tRNA(Thr) + AMP + diphosphate + H(+). Its function is as follows. Catalyzes the attachment of threonine to tRNA(Thr) in a two-step reaction: L-threonine is first activated by ATP to form Thr-AMP and then transferred to the acceptor end of tRNA(Thr). Also edits incorrectly charged L-seryl-tRNA(Thr). The polypeptide is Threonine--tRNA ligase (Anaeromyxobacter dehalogenans (strain 2CP-1 / ATCC BAA-258)).